The chain runs to 139 residues: Holo-[acyl-carrier-protein] synthase (139 aa).

Mg(2+) contacts are provided by D8 and E61.

It belongs to the P-Pant transferase superfamily. AcpS family. It depends on Mg(2+) as a cofactor.

It is found in the cytoplasm. The catalysed reaction is apo-[ACP] + CoA = holo-[ACP] + adenosine 3',5'-bisphosphate + H(+). Transfers the 4'-phosphopantetheine moiety from coenzyme A to a Ser of acyl-carrier-protein. The sequence is that of Holo-[acyl-carrier-protein] synthase from Rhodopseudomonas palustris (strain BisB5).